Reading from the N-terminus, the 252-residue chain is 5'-nucleotidase SurE (252 aa).

A divalent metal cation is bound by residues aspartate 8, aspartate 9, serine 39, and asparagine 95.

This sequence belongs to the SurE nucleotidase family. A divalent metal cation is required as a cofactor.

It is found in the cytoplasm. The catalysed reaction is a ribonucleoside 5'-phosphate + H2O = a ribonucleoside + phosphate. Functionally, nucleotidase that shows phosphatase activity on nucleoside 5'-monophosphates. The polypeptide is 5'-nucleotidase SurE (Clostridium botulinum (strain ATCC 19397 / Type A)).